The following is a 261-amino-acid chain: RNA-binding protein 1 (261 aa).

2 disordered regions span residues 1–38 (MADG…SGNE) and 232–261 (QFSR…RGRR). The RRM domain maps to 151–236 (PTLYIEGLPS…SHLRLQFSRY (86 aa)). Positions 240–254 (RSGGGPRSSGPPRGG) are enriched in gly residues.

In terms of tissue distribution, ubiquitous.

The protein resides in the nucleus speckle. It localises to the cytoplasmic granule. RNA-binding protein interacting with the enod40 RNA. This Medicago truncatula (Barrel medic) protein is RNA-binding protein 1.